The chain runs to 224 residues: Flagellar L-ring protein (224 aa).

The signal sequence occupies residues 1–15 (MRSLLFSLTALVLAG). A lipid anchor (N-palmitoyl cysteine) is attached at cysteine 16. Cysteine 16 is lipidated: S-diacylglycerol cysteine.

It belongs to the FlgH family. The basal body constitutes a major portion of the flagellar organelle and consists of four rings (L,P,S, and M) mounted on a central rod.

It localises to the cell outer membrane. The protein localises to the bacterial flagellum basal body. Functionally, assembles around the rod to form the L-ring and probably protects the motor/basal body from shearing forces during rotation. This is Flagellar L-ring protein from Idiomarina loihiensis (strain ATCC BAA-735 / DSM 15497 / L2-TR).